The chain runs to 1420 residues: DNA-directed RNA polymerase subunit beta' (1420 aa).

Cysteine 71, cysteine 73, cysteine 86, and cysteine 89 together coordinate Zn(2+). Mg(2+)-binding residues include aspartate 461, aspartate 463, and aspartate 465. Cysteine 815, cysteine 889, cysteine 896, and cysteine 899 together coordinate Zn(2+).

Belongs to the RNA polymerase beta' chain family. In terms of assembly, the RNAP catalytic core consists of 2 alpha, 1 beta, 1 beta' and 1 omega subunit. When a sigma factor is associated with the core the holoenzyme is formed, which can initiate transcription. It depends on Mg(2+) as a cofactor. Zn(2+) serves as cofactor.

The catalysed reaction is RNA(n) + a ribonucleoside 5'-triphosphate = RNA(n+1) + diphosphate. Its function is as follows. DNA-dependent RNA polymerase catalyzes the transcription of DNA into RNA using the four ribonucleoside triphosphates as substrates. This chain is DNA-directed RNA polymerase subunit beta', found in Histophilus somni (strain 129Pt) (Haemophilus somnus).